A 478-amino-acid polypeptide reads, in one-letter code: Protein nucleotidyltransferase YdiU (478 aa).

ATP-binding residues include Gly-84, Gly-86, Arg-87, Lys-107, Asp-119, Gly-120, Arg-170, and Arg-177. Asp-246 acts as the Proton acceptor in catalysis. Positions 247 and 256 each coordinate Mg(2+). Position 256 (Asp-256) interacts with ATP.

The protein belongs to the SELO family. The cofactor is Mg(2+). Requires Mn(2+) as cofactor.

The catalysed reaction is L-seryl-[protein] + ATP = 3-O-(5'-adenylyl)-L-seryl-[protein] + diphosphate. It catalyses the reaction L-threonyl-[protein] + ATP = 3-O-(5'-adenylyl)-L-threonyl-[protein] + diphosphate. It carries out the reaction L-tyrosyl-[protein] + ATP = O-(5'-adenylyl)-L-tyrosyl-[protein] + diphosphate. The enzyme catalyses L-histidyl-[protein] + UTP = N(tele)-(5'-uridylyl)-L-histidyl-[protein] + diphosphate. The catalysed reaction is L-seryl-[protein] + UTP = O-(5'-uridylyl)-L-seryl-[protein] + diphosphate. It catalyses the reaction L-tyrosyl-[protein] + UTP = O-(5'-uridylyl)-L-tyrosyl-[protein] + diphosphate. Functionally, nucleotidyltransferase involved in the post-translational modification of proteins. It can catalyze the addition of adenosine monophosphate (AMP) or uridine monophosphate (UMP) to a protein, resulting in modifications known as AMPylation and UMPylation. The polypeptide is Protein nucleotidyltransferase YdiU (Escherichia coli O9:H4 (strain HS)).